Here is a 1045-residue protein sequence, read N- to C-terminus: Cation efflux system protein CusA (1045 aa).

12 helical membrane passes run 14 to 34 (FLVL…IINT), 336 to 356 (LSGK…LFLW), 361 to 381 (ALVA…VMHF), 388 to 408 (IMSL…AIVM), 444 to 464 (VGPA…PIFT), 483 to 503 (AMAG…GYWI), 530 to 550 (VLHW…TVLW), 869 to 889 (KLKL…YLAF), 896 to 916 (LLII…LWWM), 926 to 946 (TGFI…LMYL), 983 to 1003 (AMTV…TGAG), and 1010 to 1030 (IAAP…FIIP).

Belongs to the resistance-nodulation-cell division (RND) (TC 2.A.6) family. As to quaternary structure, the cus efflux system is composed of CusA, CusB, CusC and CusF.

It localises to the cell inner membrane. Its function is as follows. Part of a cation efflux system that mediates resistance to copper and silver. The protein is Cation efflux system protein CusA (cusA) of Escherichia coli O157:H7.